The sequence spans 154 residues: 6,7-dimethyl-8-ribityllumazine synthase (154 aa).

5-amino-6-(D-ribitylamino)uracil contacts are provided by residues phenylalanine 22, 56–58 (AFE), and 80–82 (AVI). 85–86 (AT) is a (2S)-2-hydroxy-3-oxobutyl phosphate binding site. Histidine 88 serves as the catalytic Proton donor. Phenylalanine 113 contributes to the 5-amino-6-(D-ribitylamino)uracil binding site. Position 127 (arginine 127) interacts with (2S)-2-hydroxy-3-oxobutyl phosphate.

Belongs to the DMRL synthase family.

The enzyme catalyses (2S)-2-hydroxy-3-oxobutyl phosphate + 5-amino-6-(D-ribitylamino)uracil = 6,7-dimethyl-8-(1-D-ribityl)lumazine + phosphate + 2 H2O + H(+). It functions in the pathway cofactor biosynthesis; riboflavin biosynthesis; riboflavin from 2-hydroxy-3-oxobutyl phosphate and 5-amino-6-(D-ribitylamino)uracil: step 1/2. Functionally, catalyzes the formation of 6,7-dimethyl-8-ribityllumazine by condensation of 5-amino-6-(D-ribitylamino)uracil with 3,4-dihydroxy-2-butanone 4-phosphate. This is the penultimate step in the biosynthesis of riboflavin. The chain is 6,7-dimethyl-8-ribityllumazine synthase from Clostridium botulinum (strain 657 / Type Ba4).